The following is a 76-amino-acid chain: MEERIKEIIADQLGIDVEQIKPESKFVDDLGADSLDVVELIMAFEEEFDVEIPDEDAEKIQTVGDVINYIKEKKGE.

The Carrier domain occupies 1-74 (MEERIKEIIA…DVINYIKEKK (74 aa)). At S34 the chain carries O-(pantetheine 4'-phosphoryl)serine.

It belongs to the acyl carrier protein (ACP) family. 4'-phosphopantetheine is transferred from CoA to a specific serine of apo-ACP by AcpS. This modification is essential for activity because fatty acids are bound in thioester linkage to the sulfhydryl of the prosthetic group.

The protein resides in the cytoplasm. It functions in the pathway lipid metabolism; fatty acid biosynthesis. Its function is as follows. Carrier of the growing fatty acid chain in fatty acid biosynthesis. This Persephonella marina (strain DSM 14350 / EX-H1) protein is Acyl carrier protein.